Here is a 280-residue protein sequence, read N- to C-terminus: Cell envelope integrity protein EipB (280 aa).

The first 24 residues, 1 to 24 (MRFVRIAAAASGATVFMWAGFAGA), serve as a signal peptide directing secretion. An intrachain disulfide couples cysteine 69 to cysteine 278.

As to quaternary structure, monomer.

The protein localises to the periplasm. Functionally, functions in the periplasm to maintain cell envelope integrity. This chain is Cell envelope integrity protein EipB, found in Brucella abortus (strain 2308).